Here is a 437-residue protein sequence, read N- to C-terminus: Perilipin-2 (437 aa).

Residue Ala-2 is modified to N-acetylalanine. Position 215 is a phosphoserine (Ser-215). Tyr-232 is modified (phosphotyrosine). The interval 412–437 is disordered; sequence SQNAQDQGAEMDKSSQETQRSEHKTH. Positions 421 to 437 are enriched in basic and acidic residues; the sequence is EMDKSSQETQRSEHKTH.

Belongs to the perilipin family. In terms of assembly, interacts with IRGC. Acylated; primarily with C14, C16 and C18 fatty acids. In terms of processing, phosphorylation at Tyr-232 by isoform 1 of CHKA (CHKalpha2) promotes dissociation from lipid droplets: dissociation is followed by recruitment of autophagosome machinery to lipid droplets and subsequent lipid droplet lipolysis. Post-translationally, polyubiquitination of Nt-acetylatable A-PLIN2 by MARCHF6 lead to degradation by 26S proteasomes. Milk lipid globules.

It localises to the membrane. The protein localises to the lipid droplet. In terms of biological role, structural component of lipid droplets, which is required for the formation and maintenance of lipid storage droplets. The chain is Perilipin-2 from Homo sapiens (Human).